The primary structure comprises 215 residues: Large ribosomal subunit protein bL25 (215 aa).

The interval 190-215 (VLTDAEEETDETPEEPEAIRQKGDEE) is disordered. Positions 193–205 (DAEEETDETPEEP) are enriched in acidic residues. The segment covering 206–215 (EAIRQKGDEE) has biased composition (basic and acidic residues).

The protein belongs to the bacterial ribosomal protein bL25 family. CTC subfamily. As to quaternary structure, part of the 50S ribosomal subunit; part of the 5S rRNA/L5/L18/L25 subcomplex. Contacts the 5S rRNA. Binds to the 5S rRNA independently of L5 and L18.

This is one of the proteins that binds to the 5S RNA in the ribosome where it forms part of the central protuberance. The sequence is that of Large ribosomal subunit protein bL25 from Maricaulis maris (strain MCS10) (Caulobacter maris).